Consider the following 124-residue polypeptide: Small ribosomal subunit protein uS12 (124 aa).

Asp89 carries the 3-methylthioaspartic acid modification. Residues 101-124 (TLDTSGVKDRRQSRSKYGAKAPKE) are disordered.

The protein belongs to the universal ribosomal protein uS12 family. In terms of assembly, part of the 30S ribosomal subunit. Contacts proteins S8 and S17. May interact with IF1 in the 30S initiation complex.

Its function is as follows. With S4 and S5 plays an important role in translational accuracy. Functionally, interacts with and stabilizes bases of the 16S rRNA that are involved in tRNA selection in the A site and with the mRNA backbone. Located at the interface of the 30S and 50S subunits, it traverses the body of the 30S subunit contacting proteins on the other side and probably holding the rRNA structure together. The combined cluster of proteins S8, S12 and S17 appears to hold together the shoulder and platform of the 30S subunit. This is Small ribosomal subunit protein uS12 from Synechococcus sp. (strain CC9902).